The sequence spans 311 residues: Long form salivary protein D7L1 (311 aa).

A signal peptide spans 1-16; the sequence is MKALIFLGAIIAGVLS. 2 cysteine pairs are disulfide-bonded: cysteine 34–cysteine 67 and cysteine 63–cysteine 120. Positions 146, 149, 153, and 160 each coordinate ADP. 3 cysteine pairs are disulfide-bonded: cysteine 170–cysteine 202, cysteine 183–cysteine 311, and cysteine 244–cysteine 258. Positions 281, 282, and 283 each coordinate ADP.

Belongs to the PBP/GOBP family. As to expression, distal lateral and medial lobes of female mosquito salivary gland (at protein level). Expressed in the head and thorax of the female mosquitoes, where the salivary glands are located. Expressed in salivary gland. Not detected in the female mosquito abdomen. Not detected in the male mosquito tissues.

It localises to the secreted. Functionally, modulates blood feeding of female mosquitoes on vertebrate species by binding and sequestering different mediators involved in the host response. Binds adenine, adenosine, AMP, ADP and ATP, with the highest affinity to ATP and ADP. Inhibits agonist-induced platelet aggregation and hemostasis. This chain is Long form salivary protein D7L1, found in Culex quinquefasciatus (Southern house mosquito).